The following is a 780-amino-acid chain: Reticulon-1 (780 aa).

4 disordered regions span residues 1-76, 128-176, 201-223, and 293-576; these read MAAP…VAME, QKEN…AEST, RPQEAKGQEEQHPGLEDKDLDFK, and MTAT…IPGP. Phosphoserine is present on residues S13 and S70. A Phosphoserine modification is found at S327. Positions 328-341 are enriched in low complexity; the sequence is PGSVTPPSSGTEPS. S350, S352, and S487 each carry phosphoserine. The span at 497-512 shows a compositional bias: basic and acidic residues; it reads AIREETGSRATEERAP. A Reticulon domain is found at 593 to 780; the sequence is AIDLLYWRDI…KIPGAKRHAE (188 aa). 2 helical membrane passes run 607-627 and 709-729; these read IVFGSFLLLLFSLTQFSVVSV and FAVLMWLLTYVGALFNGLTLL.

Interacts with NDRG1. Interacts with BACE1. Interacts with TMEM33.

The protein resides in the endoplasmic reticulum membrane. Its subcellular location is the golgi apparatus membrane. Functionally, inhibits amyloid precursor protein processing, probably by blocking BACE1 activity. The polypeptide is Reticulon-1 (Rtn1) (Mus musculus (Mouse)).